A 333-amino-acid chain; its full sequence is GDP-mannose transporter GONST1 (333 aa).

The next 9 membrane-spanning stretches (helical) occupy residues 33–55, 62–84, 99–121, 153–170, 174–196, 216–238, 253–275, 282–304, and 308–325; these read ALLSGLAYCISSCSMILVNKFVL, AGIFLMLYQNFVSVIIVVGLSLM, VWFPVNVIFVGMLITSMFSLKYI, VWAALFLMIISAVSGGIT, FNAVGYAWQIANCFLTASYSLTL, SMVLLNNTLSLPLGLLLSYFFNE, FWMVMTLSGLLGLAISFTSMWFL, TYSLVGSLNKIPLSIAGIVLFNV, and LQNSASILFGLVAGVVFA.

Belongs to the nucleotide-sugar transporter family. GDP-Mannose:GMP antiporter (GMA) (TC 2.A.7.13) subfamily.

It is found in the golgi apparatus membrane. In terms of biological role, involved in the import of GDP-mannose from the cytoplasm into the Golgi lumen. Required for the luminal synthesis of a variety of plant cell surface components. Is required for the correct mannosylation of the glycosylinositol phosphoceramides (GIPC). Can indifferently transport GDP-mannose, GDP-Glucose, GDP-Fucose or GDP-Galactose in vitro. This Arabidopsis thaliana (Mouse-ear cress) protein is GDP-mannose transporter GONST1.